Consider the following 67-residue polypeptide: Large ribosomal subunit protein bL35 (67 aa).

It belongs to the bacterial ribosomal protein bL35 family.

This chain is Large ribosomal subunit protein bL35, found in Picosynechococcus sp. (strain ATCC 27264 / PCC 7002 / PR-6) (Agmenellum quadruplicatum).